Reading from the N-terminus, the 144-residue chain is Large ribosomal subunit protein uL16 (144 aa).

A compositionally biased stretch (basic residues) spans 1–16; it reads MLTPKRVKHRKQHRGK. Residues 1-22 are disordered; it reads MLTPKRVKHRKQHRGKMAGNAK.

It belongs to the universal ribosomal protein uL16 family. Part of the 50S ribosomal subunit.

Functionally, binds 23S rRNA and is also seen to make contacts with the A and possibly P site tRNAs. This is Large ribosomal subunit protein uL16 from Brevibacillus brevis (strain 47 / JCM 6285 / NBRC 100599).